The primary structure comprises 500 residues: NAD(P)H-quinone oxidoreductase chain 4, chloroplastic (500 aa).

The next 14 helical transmembrane spans lie at 4 to 24 (FPWL…IFLL), 37 to 57 (LCIC…HFQL), 87 to 107 (IGPI…AWPV), 111 to 131 (AQLF…SFSS), 134 to 154 (LLLF…LLSM), 167 to 187 (FILY…GIGL), 208 to 228 (ALEV…LPII), 242 to 262 (HYST…YGLV), 272 to 292 (AHCL…IYAA), 305 to 325 (IAYS…SLSD), 330 to 350 (GAIL…FLAG), 386 to 406 (LALP…GIIT), 416 to 436 (ILIA…SLSM), and 462 to 482 (LFVS…PDFV).

The protein belongs to the complex I subunit 4 family.

It localises to the plastid. It is found in the chloroplast thylakoid membrane. The catalysed reaction is a plastoquinone + NADH + (n+1) H(+)(in) = a plastoquinol + NAD(+) + n H(+)(out). The enzyme catalyses a plastoquinone + NADPH + (n+1) H(+)(in) = a plastoquinol + NADP(+) + n H(+)(out). In Oenothera parviflora (Small-flowered evening primrose), this protein is NAD(P)H-quinone oxidoreductase chain 4, chloroplastic.